We begin with the raw amino-acid sequence, 1015 residues long: MSGGLFYNPFLRPNKGLLKKPDKEYLRLIPKCFQTPGAAGVVDVRGPQTPLCFYQDSLTVVGGDEDGKGMWWRQRAQEGTARPEADTHGSPLDFHVYDILETVYTHEKCAVIPSDKQGYVVPCGIVIKLLGRRKADGASVCVNVFGQQAYFYASAPQGLDVEFAVLSALKASTFDRRTPCRVSVEKVTRRSIMGYGNHAGDYHKITLSHPNSVCHVATWLQDKHGCRIFEANVDATRRFVLDNDFVTFGWYSCRRAIPRLQHRDSYAELEYDCEVGDLSVRREDSSWPSYQALAFDIECLGEEGFPTATNEADLILQISCVLWSTGEEAGRYRRILLTLGTCEDIEGVEVYEFPSELDMLYAFFQLIRDLSVEIVTGYNVANFDWPYILDRARHIYSINPASLGKIRAGGVCEVRRPHDAGKGFLRANTKVRITGLIPIDMYAVCRDKLSLSDYKLDTVARHLLGAKKEDVHYKEIPRLFAAGPEGRRRLGMYCVQDSALVMDLLNHFVIHVEVAEIAKIAHIPCRRVLDDGQQIRVFSCLLAAAQKENFILPMPSASDRDGYQGATVIQPLSGFYNSPVLVVDFASLYPSIIQAHNLCYSTMITPGEEHRLAGLRPGEDYESFRLTGGVYHFVKKHVHESFLASLLTSWLAKRKAIKKLLAACEDPRQRTILDKQQLAIKCTCNAVYGFTGVANGLFPCLSIAETVTLQGRTMLERAKAFVEALSPANLQALAPSPDAWAPLNPEGQLRVIYGDTDSLFIECRGFSESETLRFAEALAAHTTRSLFVAPISLEAEKTFSCLMLITKKRYVGVLTDGKTLMKGVELVRKTACKFVQTRCRRVLDLVLADARVKEAASLLSHRPFQESFTQGLPVGFLPVIDILNQAYTDLREGRVPMGELCFSTELSRKLSAYKSTQMPHLAVYQKFVERNEELPQIHDRIQYVFVEPKGGVKGARKTEMAEDPAYAERHGVPVAVDHYFDKLLQGAANILQCLFDNNSGAALSVLQNFTARPPF.

This sequence belongs to the DNA polymerase type-B family. Forms a complex with the major DNA-binding protein BALF2, the DNA polymerase processivity factor BMRF1, and the alkaline exonuclease BGLF5. Interacts with the putative helicase-primase complex composed of BBLF4, BSLF1 and BBLF2/3 proteins; these interactions may coordinate leading and lagging strand DNA synthesis at the replication fork.

It is found in the host nucleus. It carries out the reaction DNA(n) + a 2'-deoxyribonucleoside 5'-triphosphate = DNA(n+1) + diphosphate. In terms of biological role, replicates viral genomic DNA in the late phase of lytic infection, producing long concatemeric DNA. The replication complex is composed of six viral proteins: the DNA polymerase, processivity factor, primase, primase-associated factor, helicase, and ssDNA-binding protein. The polypeptide is DNA polymerase catalytic subunit (Homo sapiens (Human)).